A 272-amino-acid chain; its full sequence is Glutamate racemase (272 aa).

Substrate contacts are provided by residues 10 to 11 (DS) and 42 to 43 (YG). The active-site Proton donor/acceptor is Cys73. 74–75 (NT) contributes to the substrate binding site. Catalysis depends on Cys183, which acts as the Proton donor/acceptor. 184 to 185 (TH) provides a ligand contact to substrate.

Belongs to the aspartate/glutamate racemases family.

It catalyses the reaction L-glutamate = D-glutamate. It functions in the pathway cell wall biogenesis; peptidoglycan biosynthesis. Functionally, provides the (R)-glutamate required for cell wall biosynthesis. This Leifsonia xyli subsp. xyli (strain CTCB07) protein is Glutamate racemase.